The primary structure comprises 230 residues: Uracil-DNA glycosylase (230 aa).

Asp70 serves as the catalytic Proton acceptor.

Belongs to the uracil-DNA glycosylase (UDG) superfamily. UNG family.

The protein resides in the cytoplasm. It catalyses the reaction Hydrolyzes single-stranded DNA or mismatched double-stranded DNA and polynucleotides, releasing free uracil.. Excises uracil residues from the DNA which can arise as a result of misincorporation of dUMP residues by DNA polymerase or due to deamination of cytosine. This is Uracil-DNA glycosylase from Pseudomonas entomophila (strain L48).